The primary structure comprises 390 residues: Altered inheritance of mitochondria protein 6 (390 aa).

A signal peptide spans 1–26; the sequence is MLGLKGCLTILIGYVIAVCALFSSRG.

The protein belongs to the AIM6 family.

The protein is Altered inheritance of mitochondria protein 6 (AIM6) of Saccharomyces cerevisiae (strain RM11-1a) (Baker's yeast).